The primary structure comprises 119 residues: MPRVKRGVTARARHKKVLALAKGFRGRRGNVFRIAKEAVMKAGQYAYRDRRTKKRVFRQLWIARINAASRSFGMTYSQFANGLKKAGIEIDRKVLSDMAIHDSAAFGAIVEQVKAKLAA.

Belongs to the bacterial ribosomal protein bL20 family.

Functionally, binds directly to 23S ribosomal RNA and is necessary for the in vitro assembly process of the 50S ribosomal subunit. It is not involved in the protein synthesizing functions of that subunit. The polypeptide is Large ribosomal subunit protein bL20 (Polaromonas sp. (strain JS666 / ATCC BAA-500)).